Here is a 321-residue protein sequence, read N- to C-terminus: uncharacterized protein (321 aa).

It belongs to the carbohydrate kinase PfkB family.

This is an uncharacterized protein from Escherichia coli (strain K12).